Reading from the N-terminus, the 230-residue chain is Ribonuclease HII (230 aa).

In terms of domain architecture, RNase H type-2 spans 1-224 (MIIIGIDEAG…CKRILDKSKQ (224 aa)). A divalent metal cation contacts are provided by D7, E8, and D112.

Belongs to the RNase HII family. Mn(2+) is required as a cofactor. Requires Mg(2+) as cofactor.

The protein localises to the cytoplasm. It catalyses the reaction Endonucleolytic cleavage to 5'-phosphomonoester.. In terms of biological role, endonuclease that specifically degrades the RNA of RNA-DNA hybrids. In Methanocaldococcus jannaschii (strain ATCC 43067 / DSM 2661 / JAL-1 / JCM 10045 / NBRC 100440) (Methanococcus jannaschii), this protein is Ribonuclease HII (rnhB).